Consider the following 801-residue polypeptide: Phenylalanine--tRNA ligase beta subunit (801 aa).

The 109-residue stretch at 39-147 (GGGLDQVVVA…SDLPLGVPLF (109 aa)) folds into the tRNA-binding domain. In terms of domain architecture, B5 spans 401–477 (VSHRTIRFRV…RLNGYDRIET (77 aa)). Residues Asp-455, Asp-461, Glu-464, and Glu-465 each contribute to the Mg(2+) site. In terms of domain architecture, FDX-ACB spans 708–801 (SRFPDTFRDI…LVAKLGATIR (94 aa)).

This sequence belongs to the phenylalanyl-tRNA synthetase beta subunit family. Type 1 subfamily. Tetramer of two alpha and two beta subunits. Requires Mg(2+) as cofactor.

It is found in the cytoplasm. The enzyme catalyses tRNA(Phe) + L-phenylalanine + ATP = L-phenylalanyl-tRNA(Phe) + AMP + diphosphate + H(+). The chain is Phenylalanine--tRNA ligase beta subunit from Geobacter sulfurreducens (strain ATCC 51573 / DSM 12127 / PCA).